The sequence spans 707 residues: Elongation factor G (707 aa).

The 281-residue stretch at 8–288 (QFTRNIGIMA…AVCKFLPSPA (281 aa)) folds into the tr-type G domain. Residues 17–24 (AHIDAGKT), 85–89 (DTPGH), and 139–142 (NKMD) contribute to the GTP site. A disordered region spans residues 288–308 (ADTPTVEGTDPSDPNKVIERK).

The protein belongs to the TRAFAC class translation factor GTPase superfamily. Classic translation factor GTPase family. EF-G/EF-2 subfamily.

The protein resides in the cytoplasm. Catalyzes the GTP-dependent ribosomal translocation step during translation elongation. During this step, the ribosome changes from the pre-translocational (PRE) to the post-translocational (POST) state as the newly formed A-site-bound peptidyl-tRNA and P-site-bound deacylated tRNA move to the P and E sites, respectively. Catalyzes the coordinated movement of the two tRNA molecules, the mRNA and conformational changes in the ribosome. This chain is Elongation factor G, found in Porphyromonas gingivalis (strain ATCC 33277 / DSM 20709 / CIP 103683 / JCM 12257 / NCTC 11834 / 2561).